A 968-amino-acid chain; its full sequence is RNA polymerase-associated protein RapA (968 aa).

One can recognise a Helicase ATP-binding domain in the interval 164–334 (DVGRRHAPRV…FARLRLLDPN (171 aa)). 177-184 (DEVGLGKT) serves as a coordination point for ATP. The short motif at 280–283 (DEAH) is the DEAH box element. The Helicase C-terminal domain maps to 490 to 662 (RVEWLMGYLT…YLASPDQTEG (173 aa)).

The protein belongs to the SNF2/RAD54 helicase family. RapA subfamily. In terms of assembly, interacts with the RNAP. Has a higher affinity for the core RNAP than for the holoenzyme. Its ATPase activity is stimulated by binding to RNAP.

Its function is as follows. Transcription regulator that activates transcription by stimulating RNA polymerase (RNAP) recycling in case of stress conditions such as supercoiled DNA or high salt concentrations. Probably acts by releasing the RNAP, when it is trapped or immobilized on tightly supercoiled DNA. Does not activate transcription on linear DNA. Probably not involved in DNA repair. The sequence is that of RNA polymerase-associated protein RapA from Shigella boydii serotype 18 (strain CDC 3083-94 / BS512).